The primary structure comprises 472 residues: L-fuculokinase (472 aa).

The protein belongs to the FGGY kinase family. A divalent metal cation is required as a cofactor.

It carries out the reaction L-fuculose + ATP = L-fuculose 1-phosphate + ADP + H(+). It participates in carbohydrate degradation; L-fucose degradation; L-lactaldehyde and glycerone phosphate from L-fucose: step 2/3. In terms of biological role, catalyzes the phosphorylation of L-fuculose. Can also phosphorylate, with lower efficiency, D-ribulose, D-xylulose and D-fructose. In Escherichia coli (strain K12), this protein is L-fuculokinase.